The chain runs to 301 residues: Nucleotide-binding protein Rfer_1653 (301 aa).

15-22 lines the ATP pocket; the sequence is GMSGSGKS. Residue 64–67 coordinates GTP; sequence DVRT.

The protein belongs to the RapZ-like family.

Its function is as follows. Displays ATPase and GTPase activities. This Albidiferax ferrireducens (strain ATCC BAA-621 / DSM 15236 / T118) (Rhodoferax ferrireducens) protein is Nucleotide-binding protein Rfer_1653.